The following is a 580-amino-acid chain: Arginine--tRNA ligase (580 aa).

The short motif at 131–141 is the 'HIGH' region element; it reads ANPTGPMHVGH.

The protein belongs to the class-I aminoacyl-tRNA synthetase family. In terms of assembly, monomer.

Its subcellular location is the cytoplasm. The catalysed reaction is tRNA(Arg) + L-arginine + ATP = L-arginyl-tRNA(Arg) + AMP + diphosphate. The polypeptide is Arginine--tRNA ligase (Cereibacter sphaeroides (strain ATCC 17029 / ATH 2.4.9) (Rhodobacter sphaeroides)).